Reading from the N-terminus, the 319-residue chain is Transcription initiation factor IIB 6 (319 aa).

Residues 1–16 (MTDARMRSREQERTDE) show a composition bias toward basic and acidic residues. Residues 1–33 (MTDARMRSREQERTDETESESTDGCPECGGLVV) are disordered. The TFIIB-type zinc finger occupies 21–51 (STDGCPECGGLVVNDEEHGESVCADCGLVVE). Residues cysteine 25, cysteine 28, cysteine 43, and cysteine 46 each contribute to the Zn(2+) site. The segment covering 59-74 (PEWRAFDSKEKDEKSR) has biased composition (basic and acidic residues). The interval 59 to 89 (PEWRAFDSKEKDEKSRVGAPTTNTMHDKGLS) is disordered. Repeat copies occupy residues 137 to 220 (GEID…VREL) and 231 to 312 (SYVP…ELLE).

This sequence belongs to the TFIIB family.

Stabilizes TBP binding to an archaeal box-A promoter. Also responsible for recruiting RNA polymerase II to the pre-initiation complex (DNA-TBP-TFIIB). This is Transcription initiation factor IIB 6 from Halobacterium salinarum (strain ATCC 700922 / JCM 11081 / NRC-1) (Halobacterium halobium).